We begin with the raw amino-acid sequence, 235 residues long: Segregation and condensation protein A (235 aa).

This sequence belongs to the ScpA family. Component of a cohesin-like complex composed of ScpA, ScpB and the Smc homodimer, in which ScpA and ScpB bind to the head domain of Smc. The presence of the three proteins is required for the association of the complex with DNA.

The protein localises to the cytoplasm. In terms of biological role, participates in chromosomal partition during cell division. May act via the formation of a condensin-like complex containing Smc and ScpB that pull DNA away from mid-cell into both cell halves. The protein is Segregation and condensation protein A of Streptococcus agalactiae serotype III (strain NEM316).